Here is a 208-residue protein sequence, read N- to C-terminus: Uracil phosphoribosyltransferase (208 aa).

Residues Arg78, Arg103, and 130 to 138 (DPMLATGGS) each bind 5-phospho-alpha-D-ribose 1-diphosphate. Residues Ile193 and 198–200 (GDA) each bind uracil. Asp199 contacts 5-phospho-alpha-D-ribose 1-diphosphate.

The protein belongs to the UPRTase family. The cofactor is Mg(2+).

The catalysed reaction is UMP + diphosphate = 5-phospho-alpha-D-ribose 1-diphosphate + uracil. Its pathway is pyrimidine metabolism; UMP biosynthesis via salvage pathway; UMP from uracil: step 1/1. Its activity is regulated as follows. Allosterically activated by GTP. In terms of biological role, catalyzes the conversion of uracil and 5-phospho-alpha-D-ribose 1-diphosphate (PRPP) to UMP and diphosphate. The protein is Uracil phosphoribosyltransferase of Shewanella baltica (strain OS223).